Reading from the N-terminus, the 642-residue chain is Sec1 family domain-containing protein 1 (642 aa).

Ala-2 is modified (N-acetylalanine). 3 positions are modified to phosphoserine: Ser-37, Ser-303, and Ser-528.

The protein belongs to the STXBP/unc-18/SEC1 family. In terms of assembly, interacts with STX17. Interacts with STX5A. Interacts with the COG complex via COG4.

It localises to the cytoplasm. It is found in the endoplasmic reticulum membrane. The protein resides in the golgi apparatus. Its subcellular location is the golgi stack membrane. Its function is as follows. Plays a role in SNARE-pin assembly and Golgi-to-ER retrograde transport via its interaction with COG4. Involved in vesicular transport between the endoplasmic reticulum and the Golgi. This is Sec1 family domain-containing protein 1 (SCFD1) from Homo sapiens (Human).